A 555-amino-acid chain; its full sequence is Cinnamate beta-D-glucosyltransferase (555 aa).

Catalysis depends on His-19, which acts as the Proton acceptor. An anthocyanidin is bound at residue His-19. 6 residues coordinate UDP-alpha-D-glucose: Gln-344, His-359, Trp-362, Asn-363, Ser-364, and Glu-367. Gly-382 provides a ligand contact to an anthocyanidin. 2 residues coordinate UDP-alpha-D-glucose: Asp-383 and Gln-384.

Belongs to the UDP-glycosyltransferase family. As to expression, highest expression detected in fruit, with lower levels detected in flower and petiole. Barely detectable in leaf and root.

The catalysed reaction is (E)-cinnamate + UDP-alpha-D-glucose = 1-O-(trans-cinnamoyl)-beta-D-glucose + UDP. In terms of biological role, broad spectrum multifunctional glucosyltransferase. Catalyzes the formation of cinnamic acid and p-coumaric acid glucose esters during fruit ripening. Accepted substrates range from derivatives of cinnamic acid and benzoic acid to heterocyclic and aliphatic compounds, resulting in the formation of O- and S-glucose esters and O-glucosides. May also be involved in detoxification of xenobiotics. This is Cinnamate beta-D-glucosyltransferase from Fragaria ananassa (Strawberry).